Consider the following 108-residue polypeptide: Circadian clock oscillator protein KaiB (108 aa).

It belongs to the KaiB family. In terms of assembly, may undergo a major conformational rearrangment; in the free state forms homooligomers. When bound to KaiC switches to a monomeric thioredoxin-fold (KaiB(fs)). The active oscillator complex is probably KaiC(6):KaiB(6).

Component of the KaiBC clock protein complex, which constitutes the main circadian regulator in cyanobacteria; it may modify the ATPase activity of KaiC. In terms of biological role, may be a metamorphic protein which reversibly switches between an inactive tetrameric fold and a rare, thioredoxin-like monomeric fold (KaiB(fs)). KaiB(fs) binds phospho-KaiC, and perhaps clock output effectors. This Prochlorococcus marinus (strain MIT 9515) protein is Circadian clock oscillator protein KaiB.